The primary structure comprises 500 residues: NF-kappa-B inhibitor cactus (500 aa).

A compositionally biased stretch (low complexity) spans 1-43 (MPSPTKAAEAATKATATSDCSCSAASVEQRAPSNAANPSSSLA). 2 disordered regions span residues 1-148 (MPSP…MRLK) and 171-212 (LNNL…APPS). Position 45 is a phosphoserine; by PKC (Ser45). Positions 69 to 86 (NETSDSGFISGPQSSQIF) are enriched in polar residues. The span at 118 to 130 (IIDEEEDQEEQEK) shows a compositional bias: acidic residues. Ser144 is subject to Phosphoserine; by PKC. Residues 171–189 (LNNLGQSSSTQITGRSKVQ) are compositionally biased toward polar residues. Residue Thr183 is modified to Phosphothreonine; by PKC. A compositionally biased stretch (low complexity) spans 190 to 212 (SSTASTANANPSGSGATSSAPPS). 5 ANK repeats span residues 229-261 (DGDT…LLNI), 265-294 (VAQT…EPTV), 298-327 (HGNT…ATEI), 361-390 (DGER…DINA), and 395-424 (SGRT…KLNL). Phosphothreonine; by PKC occurs at positions 293 and 319. At Ser395 the chain carries Phosphoserine; by PKC.

This sequence belongs to the NF-kappa-B inhibitor family. In terms of assembly, phosphorylated isoform A binds to dorsal (dl); inhibits dl translocation to the nucleus and therefore from binding to DNA. In vitro, interacts with IKKbeta. Interacts with cactin and kappa-B-Ras. Post-translationally, activated IKKbeta phosphorylates cact. As to expression, expressed in ovary (at protein level).

The protein resides in the cytoplasm. In terms of biological role, involved in the formation of the dorsoventral pattern. It inhibits nuclear translocation of the dorsal morphogen in the dorsal region of the embryo. Acts as a negative regulator of the NF-kappa-B (rel) signaling pathway. Cact is degraded by IKKbeta, this is essential for NF-kappa-B (rel) activation. The protein is NF-kappa-B inhibitor cactus (cact) of Drosophila melanogaster (Fruit fly).